Reading from the N-terminus, the 811-residue chain is Leucine--tRNA ligase (811 aa).

The 'HIGH' region signature appears at 40–50; the sequence is PYPSGRLHMGH. A 'KMSKS' region motif is present at residues 579-583; it reads KMSKS. An ATP-binding site is contributed by K582.

It belongs to the class-I aminoacyl-tRNA synthetase family.

The protein resides in the cytoplasm. It carries out the reaction tRNA(Leu) + L-leucine + ATP = L-leucyl-tRNA(Leu) + AMP + diphosphate. This Campylobacter fetus subsp. fetus (strain 82-40) protein is Leucine--tRNA ligase.